We begin with the raw amino-acid sequence, 373 residues long: Chaperone protein DnaJ (373 aa).

One can recognise a J domain in the interval Asp5–Gly70. Residues Gly133 to Asn211 form a CR-type zinc finger. 8 residues coordinate Zn(2+): Cys146, Cys149, Cys163, Cys166, Cys185, Cys188, Cys199, and Cys202. 4 CXXCXGXG motif repeats span residues Cys146 to Gly153, Cys163 to Gly170, Cys185 to Gly192, and Cys199 to Gly206.

It belongs to the DnaJ family. As to quaternary structure, homodimer. The cofactor is Zn(2+).

It localises to the cytoplasm. Functionally, participates actively in the response to hyperosmotic and heat shock by preventing the aggregation of stress-denatured proteins and by disaggregating proteins, also in an autonomous, DnaK-independent fashion. Unfolded proteins bind initially to DnaJ; upon interaction with the DnaJ-bound protein, DnaK hydrolyzes its bound ATP, resulting in the formation of a stable complex. GrpE releases ADP from DnaK; ATP binding to DnaK triggers the release of the substrate protein, thus completing the reaction cycle. Several rounds of ATP-dependent interactions between DnaJ, DnaK and GrpE are required for fully efficient folding. Also involved, together with DnaK and GrpE, in the DNA replication of plasmids through activation of initiation proteins. The sequence is that of Chaperone protein DnaJ from Bordetella bronchiseptica (strain ATCC BAA-588 / NCTC 13252 / RB50) (Alcaligenes bronchisepticus).